Here is a 211-residue protein sequence, read N- to C-terminus: Histidine biosynthesis bifunctional protein HisIE (211 aa).

Residues 1–122 (MSFKAAEVSS…DAQEESQMVW (122 aa)) are phosphoribosyl-AMP cyclohydrolase. A phosphoribosyl-ATP pyrophosphohydrolase region spans residues 123 to 211 (LHQLEQLLAA…VVNKLKERHK (89 aa)).

In the N-terminal section; belongs to the PRA-CH family. It in the C-terminal section; belongs to the PRA-PH family.

The protein localises to the cytoplasm. The enzyme catalyses 1-(5-phospho-beta-D-ribosyl)-ATP + H2O = 1-(5-phospho-beta-D-ribosyl)-5'-AMP + diphosphate + H(+). It catalyses the reaction 1-(5-phospho-beta-D-ribosyl)-5'-AMP + H2O = 1-(5-phospho-beta-D-ribosyl)-5-[(5-phospho-beta-D-ribosylamino)methylideneamino]imidazole-4-carboxamide. It participates in amino-acid biosynthesis; L-histidine biosynthesis; L-histidine from 5-phospho-alpha-D-ribose 1-diphosphate: step 2/9. It functions in the pathway amino-acid biosynthesis; L-histidine biosynthesis; L-histidine from 5-phospho-alpha-D-ribose 1-diphosphate: step 3/9. The chain is Histidine biosynthesis bifunctional protein HisIE from Vibrio parahaemolyticus serotype O3:K6 (strain RIMD 2210633).